The following is a 122-amino-acid chain: MDPDAVAKAFVEHYYSTFDANRPGLVSLYQEGSMLTFEGQKIQGSQNIVAKLTGLPFQQCKHNITTVDCQPSGPAGGMLVFVSGNLQLAGEQHALKFSQMFHLISNQGNYYVFNDIFRLNYA.

Met1 is subject to N-acetylmethionine. In terms of domain architecture, NTF2 spans 6–119; sequence VAKAFVEHYY…YYVFNDIFRL (114 aa).

As to quaternary structure, interacts with RAN1. As to expression, expressed in roots, stems, leaves and flowers, and, at low levels, in siliques.

The protein resides in the cytoplasm. It localises to the nucleus. The protein localises to the nucleus envelope. Its function is as follows. Facilitates protein transport into the nucleus. Interacts with various nucleoporins and with Ran-GDP. Could be part of a multicomponent system of cytosolic factors that assemble at the pore complex during nuclear import. This is Nuclear transport factor 2A from Arabidopsis thaliana (Mouse-ear cress).